The following is a 462-amino-acid chain: UDP-N-acetylmuramate--L-alanine ligase (462 aa).

An ATP-binding site is contributed by 112–118 (GTHGKTT).

It belongs to the MurCDEF family.

Its subcellular location is the cytoplasm. The enzyme catalyses UDP-N-acetyl-alpha-D-muramate + L-alanine + ATP = UDP-N-acetyl-alpha-D-muramoyl-L-alanine + ADP + phosphate + H(+). It participates in cell wall biogenesis; peptidoglycan biosynthesis. Functionally, cell wall formation. The sequence is that of UDP-N-acetylmuramate--L-alanine ligase from Geobacter sulfurreducens (strain ATCC 51573 / DSM 12127 / PCA).